A 414-amino-acid chain; its full sequence is Histidine--tRNA ligase (414 aa).

Belongs to the class-II aminoacyl-tRNA synthetase family. In terms of assembly, homodimer.

It localises to the cytoplasm. It carries out the reaction tRNA(His) + L-histidine + ATP = L-histidyl-tRNA(His) + AMP + diphosphate + H(+). The sequence is that of Histidine--tRNA ligase from Synechococcus sp. (strain RCC307).